The chain runs to 708 residues: C-Jun-amino-terminal kinase-interacting protein 1 (708 aa).

A disordered region spans residues 1–26 (MAERESGLSGGAASPPAASPFLGLHI). The segment covering 11-24 (GAASPPAASPFLGL) has biased composition (low complexity). Residues serine 14, serine 28, and serine 39 each carry the phosphoserine modification. A disordered region spans residues 69–368 (PPRAGLLSAG…PPRASLSSDT (300 aa)). Positions 71–87 (RAGLLSAGSSGSAGSRL) are enriched in low complexity. Threonine 103 bears the Phosphothreonine; by MAPK8, MAPK9 and MAPK10 mark. The span at 105 to 116 (GAEDDEEDDDEL) shows a compositional bias: acidic residues. The JNK-binding domain (JBD) stretch occupies residues 126 to 282 (SKAESGQEPA…EATEEIYLTP (157 aa)). Position 149 is a phosphoserine (serine 149). A minimal inhibitory domain (MID) region spans residues 154 to 173 (RPKRPTTLNLFPQVPRSQDT). Over residues 159 to 179 (TTLNLFPQVPRSQDTLNNNSL) the composition is skewed to polar residues. Phosphoserine occurs at positions 178, 184, 190, 192, and 193. Residues 191–201 (RSSSPLKTGEQ) show a composition bias toward polar residues. At threonine 202 the chain carries Phosphothreonine; by MAPK8, MAPK9 and MAPK10. Serine 211 is subject to Phosphoserine. Over residues 220–232 (PVPTQDRGTSTDS) the composition is skewed to polar residues. The segment covering 264–274 (IHYQADVRLEA) has biased composition (basic and acidic residues). The interaction with MAP3K7 stretch occupies residues 280-468 (LTPVQRPPDP…NVFMSGRSRS (189 aa)). Polar residues predominate over residues 292–308 (PTSTFLPPTESRMSVSS). Phosphoserine is present on residues serine 308, serine 325, serine 327, serine 337, serine 352, serine 363, serine 366, serine 404, and serine 406. 2 short sequence motifs (D-box) span residues 350 to 357 (RGSLGEPP) and 361 to 369 (RASLSSDTS). The residue at position 408 (threonine 408) is a Phosphothreonine. The tract at residues 426-448 (EEYEEAPQPRPPTCLSEDSTPDE) is disordered. Serine 441 and serine 444 each carry phosphoserine. Residue threonine 445 is modified to Phosphothreonine. A phosphoserine mark is found at serine 466, serine 468, serine 469, and serine 470. The interaction with VRK2 stretch occupies residues 468 to 657 (SSSAESFGLF…PKNNKYFGFI (190 aa)). The SH3 domain occupies 485 to 546 (EHEQTHRAIF…PAYYAIEVTK (62 aa)). Residues 558–697 (SDWIDQFRVK…FQQFYKQFVE (140 aa)) enclose the PID domain.

This sequence belongs to the JIP scaffold family. As to quaternary structure, forms homo- or heterooligomeric complexes. Binds specific components of the JNK signaling pathway namely MAPK8/JNK1, MAPK9/JNK2, MAPK10/JNK3, MAP2K7/MKK7, MAP3K11/MLK3 and DLK1. Also binds the proline-rich domain-containing splice variant of apolipoprotein E receptor 2 (ApoER2). Interacts, via the PID domain, with ARHGEF28. Binds the cytoplasmic tails of LRP1 and LRP2 (Megalin). Binds the TPR motif-containing C-terminal of kinesin light chain, KLC1. Pre-assembled MAPK8IP1 scaffolding complexes are then transported as a cargo of kinesin, to the required subcellular location. Interacts with the cytoplasmic domain of APP. Interacts with DCLK2, VRK2 and MAP3K7/TAK1. Found in a complex with SH3RF1, RAC1, MAP3K11/MLK3, MAP2K7/MKK7 and MAPK8/JNK1. Found in a complex with SH3RF1, RAC2, MAP3K7/TAK1, MAP2K7/MKK7, MAPK8/JNK1 and MAPK9/JNK2. Interacts with SH3RF2. Phosphorylated by MAPK8, MAPK9 and MAPK10. Phosphorylation on Thr-103 is also necessary for the dissociation and activation of MAP3K12. Phosphorylated by VRK2. Hyperphosphorylated during mitosis following activation of stress-activated and MAP kinases. In terms of processing, ubiquitinated. Two preliminary events are required to prime for ubiquitination; phosphorylation and an increased in intracellular calcium concentration. Then, the calcium influx initiates ubiquitination and degradation by the ubiquitin-proteasome pathway. Highly expressed in brain and pancreatic beta-cells. Weaker expression found in kidney.

Its subcellular location is the cytoplasm. The protein localises to the perinuclear region. It localises to the nucleus. The protein resides in the endoplasmic reticulum membrane. It is found in the mitochondrion membrane. In terms of biological role, the JNK-interacting protein (JIP) group of scaffold proteins selectively mediates JNK signaling by aggregating specific components of the MAPK cascade to form a functional JNK signaling module. Required for JNK activation in response to excitotoxic stress. Cytoplasmic MAPK8IP1 causes inhibition of JNK-regulated activity by retaining JNK in the cytoplasm and thus inhibiting the JNK phosphorylation of c-Jun. May also participate in ApoER2-specific reelin signaling. Directly, or indirectly, regulates GLUT2 gene expression and beta-cell function. Appears to have a role in cell signaling in mature and developing nerve terminals. May function as a regulator of vesicle transport, through interactions with the JNK-signaling components and motor proteins. Functions as an anti-apoptotic protein and whose level seems to influence the beta-cell death or survival response. Acts as a scaffold protein that coordinates with SH3RF1 in organizing different components of the JNK pathway, including RAC1 or RAC2, MAP3K11/MLK3 or MAP3K7/TAK1, MAP2K7/MKK7, MAPK8/JNK1 and/or MAPK9/JNK2 into a functional multiprotein complex to ensure the effective activation of the JNK signaling pathway. Regulates the activation of MAPK8/JNK1 and differentiation of CD8(+) T-cells. The protein is C-Jun-amino-terminal kinase-interacting protein 1 (Mapk8ip1) of Rattus norvegicus (Rat).